The chain runs to 216 residues: Probable GTP-binding protein EngB (216 aa).

The region spanning 37–214 is the EngB-type G domain; sequence GSVEIAFAGR…RAAMIRLLDE (178 aa). GTP contacts are provided by residues 45–52, 72–76, 92–95, 159–162, and 193–195; these read GRSNVGKS, GRTQE, DMPG, TKAD, and TSS. Mg(2+) is bound by residues Ser52 and Thr74.

The protein belongs to the TRAFAC class TrmE-Era-EngA-EngB-Septin-like GTPase superfamily. EngB GTPase family. Requires Mg(2+) as cofactor.

Functionally, necessary for normal cell division and for the maintenance of normal septation. The protein is Probable GTP-binding protein EngB of Rhodopseudomonas palustris (strain ATCC BAA-98 / CGA009).